The following is a 409-amino-acid chain: All trans-polyprenyl-diphosphate synthase PDSS1 (409 aa).

Residues Lys-128, Arg-131, and His-167 each contribute to the isopentenyl diphosphate site. Residues Asp-174 and Asp-178 each contribute to the Mg(2+) site. Arg-184 is a binding site for isopentenyl diphosphate.

This sequence belongs to the FPP/GGPP synthase family. In terms of assembly, heterotetramer composed of 2 PDSS1/DPS1 and 2 PDSS2/DLP1 subunits. Mg(2+) serves as cofactor.

Its subcellular location is the mitochondrion. It carries out the reaction 7 isopentenyl diphosphate + (2E,6E)-farnesyl diphosphate = all-trans-decaprenyl diphosphate + 7 diphosphate. The enzyme catalyses 6 isopentenyl diphosphate + (2E,6E)-farnesyl diphosphate = all-trans-nonaprenyl diphosphate + 6 diphosphate. It participates in cofactor biosynthesis; ubiquinone biosynthesis. Heterotetrameric enzyme that catalyzes the condensation of farnesyl diphosphate (FPP), which acts as a primer, and isopentenyl diphosphate (IPP) to produce prenyl diphosphates of varying chain lengths and participates in the determination of the side chain of ubiquinone. Supplies nona and decaprenyl diphosphate, the precursors for the side chain of the isoprenoid quinones ubiquinone-9 (Q9)and ubiquinone-10 (Q10) respectively. The enzyme adds isopentenyl diphosphate molecules sequentially to farnesyl diphosphate with trans stereochemistry. In Mus musculus (Mouse), this protein is All trans-polyprenyl-diphosphate synthase PDSS1.